We begin with the raw amino-acid sequence, 562 residues long: NAD-dependent malic enzyme 1 (562 aa).

The active-site Proton donor is Y101. R154 serves as a coordination point for NAD(+). Residue K172 is the Proton acceptor of the active site. 3 residues coordinate a divalent metal cation: E243, D244, and D267. Residues D267 and N415 each coordinate NAD(+).

Belongs to the malic enzymes family. In terms of assembly, homotetramer. Mg(2+) is required as a cofactor. Requires Mn(2+) as cofactor.

The enzyme catalyses (S)-malate + NAD(+) = pyruvate + CO2 + NADH. It catalyses the reaction oxaloacetate + H(+) = pyruvate + CO2. The sequence is that of NAD-dependent malic enzyme 1 from Vibrio vulnificus (strain YJ016).